Here is a 446-residue protein sequence, read N- to C-terminus: Probable D-serine dehydratase (446 aa).

Residue Lys-113 is modified to N6-(pyridoxal phosphate)lysine.

Belongs to the serine/threonine dehydratase family. DsdA subfamily. The cofactor is pyridoxal 5'-phosphate.

The catalysed reaction is D-serine = pyruvate + NH4(+). The protein is Probable D-serine dehydratase of Burkholderia lata (strain ATCC 17760 / DSM 23089 / LMG 22485 / NCIMB 9086 / R18194 / 383).